The following is a 249-amino-acid chain: Metallo-beta-lactamase type 2 (249 aa).

The signal sequence occupies residues 1–22 (MLKKIKISLILALGLTSLQAFG). The Zn(2+) site is built by His-98, His-100, Asp-102, His-161, and Cys-180. Lys-183 contributes to the substrate binding site. Position 222 (His-222) interacts with Zn(2+).

The protein belongs to the metallo-beta-lactamase superfamily. Class-B beta-lactamase family. As to quaternary structure, monomer. It depends on Zn(2+) as a cofactor.

Its subcellular location is the periplasm. It carries out the reaction a beta-lactam + H2O = a substituted beta-amino acid. Confers resistance to the different beta-lactams antibiotics (penicillin, cephalosporin and carbapenem) via the hydrolysis of the beta-lactam ring. The sequence is that of Metallo-beta-lactamase type 2 (blaB3) from Elizabethkingia meningoseptica (Chryseobacterium meningosepticum).